The primary structure comprises 68 residues: Large ribosomal subunit protein uL29 (68 aa).

The protein belongs to the universal ribosomal protein uL29 family.

The chain is Large ribosomal subunit protein uL29 from Leuconostoc citreum (strain KM20).